Here is a 275-residue protein sequence, read N- to C-terminus: 4-deoxy-L-threo-5-hexosulose-uronate ketol-isomerase (275 aa).

The Zn(2+) site is built by His193, His195, Glu200, and His242.

Belongs to the KduI family. Zn(2+) serves as cofactor.

It carries out the reaction 5-dehydro-4-deoxy-D-glucuronate = 3-deoxy-D-glycero-2,5-hexodiulosonate. The protein operates within glycan metabolism; pectin degradation; 2-dehydro-3-deoxy-D-gluconate from pectin: step 4/5. Catalyzes the isomerization of 5-dehydro-4-deoxy-D-glucuronate to 3-deoxy-D-glycero-2,5-hexodiulosonate. The protein is 4-deoxy-L-threo-5-hexosulose-uronate ketol-isomerase of Bacillus licheniformis (strain ATCC 14580 / DSM 13 / JCM 2505 / CCUG 7422 / NBRC 12200 / NCIMB 9375 / NCTC 10341 / NRRL NRS-1264 / Gibson 46).